The following is a 366-amino-acid chain: MWPLSHRHLCLAFLLVCVLSAISFFLHIHQDSFRHGLGLSVLCPDRRLVTHPVAIFCLPGTPMSPNTSSPCPQHPASLSGTWTIYPDGRFGNQMGQYATLLALAQLNGRRAFILPAMHTALAPVFRITLPVLAPEVDSLTPWRELRLHDWMSEEYADLGDPFLKLSGFPCSWTFFHHLREQIRSEFTLHDHLREEAQRVLRRLHLGRSGDRPRTFVGVHVRRGDYLQVMPQRWKGVVGNSAYLREAMDWFRARHEAPVFVVTSNGMEWCRENIDASKGDVVFAGDGQEASPWKDFALLTQCNHTIMTIGTFGFWAAYLAGGDTVYLANFTLPDSEFLKIFKPEAAFLPEWVGINADLSPLWTLAEP.

At 1–8 (MWPLSHRH) the chain is on the cytoplasmic side. The chain crosses the membrane as a helical; Signal-anchor for type II membrane protein span at residues 9-25 (LCLAFLLVCVLSAISFF). At 26–366 (LHIHQDSFRH…LSPLWTLAEP (341 aa)) the chain is on the lumenal side. Residues asparagine 66, asparagine 302, and asparagine 328 are each glycosylated (N-linked (GlcNAc...) asparagine).

This sequence belongs to the glycosyltransferase 11 family.

The protein resides in the golgi apparatus. Its subcellular location is the golgi stack membrane. It carries out the reaction a beta-D-galactosyl-(1-&gt;4)-N-acetyl-beta-D-glucosaminyl derivative + GDP-beta-L-fucose = an alpha-L-Fuc-(1-&gt;2)-beta-D-Gal-(1-&gt;4)-beta-D-GlcNAc derivative + GDP + H(+). The enzyme catalyses a ganglioside GA1 + GDP-beta-L-fucose = a ganglioside Fuc-GA1 + GDP + H(+). It catalyses the reaction a beta-D-Gal-(1-&gt;3)-beta-D-GlcNAc-(1-&gt;3)-beta-D-Gal-(1-&gt;4)-beta-D-Glc-(1&lt;-&gt;1')-Cer(d18:1(4E)) + GDP-beta-L-fucose = alpha-L-fucosyl-(1-&gt;2)- beta-D-galactosyl-(1-&gt;3)-N-acetyl-beta-D-glucosaminyl-(1-&gt;3)-beta-D-galactosyl-(1-&gt;4)-beta-D-glucosyl-(1&lt;-&gt;1')-N-acylsphing-4-enine + GDP + H(+). The catalysed reaction is a neolactoside nLc4Cer(d18:1(4E)) + GDP-beta-L-fucose = a neolactoside IV(2)-alpha-Fuc-nLc4Cer(d18:1(4E)) + GDP + H(+). It carries out the reaction a ganglioside GM1 + GDP-beta-L-fucose = a ganglioside Fuc-GM1 + GDP + H(+). The enzyme catalyses beta-D-galactosyl-(1-&gt;3)-N-acetyl-D-galactosamine + GDP-beta-L-fucose = alpha-L-fucosyl-(1-&gt;2)-beta-D-galactosyl-(1-&gt;3)-N-acetyl-D-galactosamine + GDP + H(+). It functions in the pathway protein modification; protein glycosylation. Functionally, catalyzes the transfer of L-fucose, from a guanosine diphosphate-beta-L-fucose, to the terminal galactose residue of glycoconjugates through an alpha(1,2) linkage leading to H antigen synthesis that is an intermediate substrate in the synthesis of ABO blood group antigens. H antigen is essential for maturation of the glomerular layer of the main olfactory bulb, in cell migration and early cell-cell contacts during tumor associated angiogenesis. Preferentially fucosylates soluble lactose and to a lesser extent fucosylates glycolipids gangliosides GA1 and GM1a. The sequence is that of Galactoside alpha-(1,2)-fucosyltransferase 1 from Ateles belzebuth (White-bellied spider monkey).